Reading from the N-terminus, the 78-residue chain is Protein SlyX homolog (78 aa).

The protein belongs to the SlyX family.

This Xylella fastidiosa (strain M23) protein is Protein SlyX homolog.